Here is a 318-residue protein sequence, read N- to C-terminus: Transaldolase (318 aa).

K132 (schiff-base intermediate with substrate) is an active-site residue.

It belongs to the transaldolase family. Type 1 subfamily. As to quaternary structure, homodimer.

It localises to the cytoplasm. The catalysed reaction is D-sedoheptulose 7-phosphate + D-glyceraldehyde 3-phosphate = D-erythrose 4-phosphate + beta-D-fructose 6-phosphate. The protein operates within carbohydrate degradation; pentose phosphate pathway; D-glyceraldehyde 3-phosphate and beta-D-fructose 6-phosphate from D-ribose 5-phosphate and D-xylulose 5-phosphate (non-oxidative stage): step 2/3. In terms of biological role, transaldolase is important for the balance of metabolites in the pentose-phosphate pathway. This is Transaldolase from Shewanella sp. (strain ANA-3).